A 464-amino-acid polypeptide reads, in one-letter code: tRNA modification GTPase MnmE (464 aa).

Positions 25, 87, and 130 each coordinate (6S)-5-formyl-5,6,7,8-tetrahydrofolate. In terms of domain architecture, TrmE-type G spans 226–386; that stretch reads GLSVVLAGQP…LREELLRIAG (161 aa). N236 contacts K(+). GTP contacts are provided by residues 236-241, 255-261, and 280-283; these read NVGKSS, TPIAGTT, and DTAG. S240 is a binding site for Mg(2+). K(+) is bound by residues T255, I257, and T260. A Mg(2+)-binding site is contributed by T261. Residue K464 coordinates (6S)-5-formyl-5,6,7,8-tetrahydrofolate.

It belongs to the TRAFAC class TrmE-Era-EngA-EngB-Septin-like GTPase superfamily. TrmE GTPase family. In terms of assembly, homodimer. Heterotetramer of two MnmE and two MnmG subunits. The cofactor is K(+).

The protein resides in the cytoplasm. Exhibits a very high intrinsic GTPase hydrolysis rate. Involved in the addition of a carboxymethylaminomethyl (cmnm) group at the wobble position (U34) of certain tRNAs, forming tRNA-cmnm(5)s(2)U34. This is tRNA modification GTPase MnmE from Paraburkholderia xenovorans (strain LB400).